The following is a 95-amino-acid chain: Integration host factor subunit beta (95 aa).

The protein belongs to the bacterial histone-like protein family. As to quaternary structure, heterodimer of an alpha and a beta chain.

This protein is one of the two subunits of integration host factor, a specific DNA-binding protein that functions in genetic recombination as well as in transcriptional and translational control. This Shewanella loihica (strain ATCC BAA-1088 / PV-4) protein is Integration host factor subunit beta.